Reading from the N-terminus, the 275-residue chain is 4-hydroxy-tetrahydrodipicolinate reductase (275 aa).

NAD(+) contacts are provided by residues 13-18, 108-110, and 134-137; these read GAAGKM, GTT, and VPNF. The active-site Proton donor/acceptor is the His164. His165 is a (S)-2,3,4,5-tetrahydrodipicolinate binding site. The active-site Proton donor is the Lys168. A (S)-2,3,4,5-tetrahydrodipicolinate-binding site is contributed by 174–175; it reads GT.

Belongs to the DapB family.

Its subcellular location is the cytoplasm. It catalyses the reaction (S)-2,3,4,5-tetrahydrodipicolinate + NAD(+) + H2O = (2S,4S)-4-hydroxy-2,3,4,5-tetrahydrodipicolinate + NADH + H(+). It carries out the reaction (S)-2,3,4,5-tetrahydrodipicolinate + NADP(+) + H2O = (2S,4S)-4-hydroxy-2,3,4,5-tetrahydrodipicolinate + NADPH + H(+). It participates in amino-acid biosynthesis; L-lysine biosynthesis via DAP pathway; (S)-tetrahydrodipicolinate from L-aspartate: step 4/4. Catalyzes the conversion of 4-hydroxy-tetrahydrodipicolinate (HTPA) to tetrahydrodipicolinate. In Gloeothece citriformis (strain PCC 7424) (Cyanothece sp. (strain PCC 7424)), this protein is 4-hydroxy-tetrahydrodipicolinate reductase.